The chain runs to 88 residues: Small ribosomal subunit protein uS15 (88 aa).

It belongs to the universal ribosomal protein uS15 family. In terms of assembly, part of the 30S ribosomal subunit. Forms a bridge to the 50S subunit in the 70S ribosome, contacting the 23S rRNA.

Its function is as follows. One of the primary rRNA binding proteins, it binds directly to 16S rRNA where it helps nucleate assembly of the platform of the 30S subunit by binding and bridging several RNA helices of the 16S rRNA. In terms of biological role, forms an intersubunit bridge (bridge B4) with the 23S rRNA of the 50S subunit in the ribosome. This chain is Small ribosomal subunit protein uS15, found in Thermoanaerobacter pseudethanolicus (strain ATCC 33223 / 39E) (Clostridium thermohydrosulfuricum).